The chain runs to 154 residues: CASP-like protein 5C2 (154 aa).

The Cytoplasmic portion of the chain corresponds to 1-17; sequence MEHVPGSFGTSASFALR. The chain crosses the membrane as a helical span at residues 18–38; it reads FGQTIFSAASLIFMCFDFDFY. Residues 39–41 are Extracellular-facing; it reads DFT. Residues 42–62 traverse the membrane as a helical segment; sequence TFCYLAMVMAIVTPWSILLAL. The Cytoplasmic portion of the chain corresponds to 63 to 81; the sequence is TDTYSVLVKLLPQELRVLS. The chain crosses the membrane as a helical span at residues 82-102; that stretch reads IVFAGDFVLSFLSLGGACAVA. The Extracellular portion of the chain corresponds to 103-128; it reads SATELLASADGKICDGSLCIQYQVSA. Residues 129-149 form a helical membrane-spanning segment; it reads ALAFLCWFLLLASALFNFWSL. Over 150-154 the chain is Cytoplasmic; sequence PSLYY.

Belongs to the Casparian strip membrane proteins (CASP) family. In terms of assembly, homodimer and heterodimers.

It localises to the cell membrane. In Arabidopsis thaliana (Mouse-ear cress), this protein is CASP-like protein 5C2.